Here is a 112-residue protein sequence, read N- to C-terminus: Large ribosomal subunit protein bL17 (112 aa).

The protein belongs to the bacterial ribosomal protein bL17 family. As to quaternary structure, part of the 50S ribosomal subunit. Contacts protein L32.

This Moorella thermoacetica (strain ATCC 39073 / JCM 9320) protein is Large ribosomal subunit protein bL17.